The primary structure comprises 164 residues: Large ribosomal subunit protein uL10 (164 aa).

This sequence belongs to the universal ribosomal protein uL10 family. As to quaternary structure, part of the ribosomal stalk of the 50S ribosomal subunit. The N-terminus interacts with L11 and the large rRNA to form the base of the stalk. The C-terminus forms an elongated spine to which L12 dimers bind in a sequential fashion forming a multimeric L10(L12)X complex.

Functionally, forms part of the ribosomal stalk, playing a central role in the interaction of the ribosome with GTP-bound translation factors. This is Large ribosomal subunit protein uL10 from Aliivibrio fischeri (strain MJ11) (Vibrio fischeri).